The sequence spans 297 residues: Probable DNA polymerase III subunit delta (297 aa).

The protein belongs to the DNA polymerase HolA subunit family. In terms of assembly, component of the DNA clamp loading complex consisting of tau(3):delta(1):delta'(1). The DNA polymerase III holoenzyme complex contains at least 10 different subunits organized into 3 functionally essential subassemblies: the Pol III core, the beta sliding clamp processivity factor and the clamp-loading complex. The Pol III core (subunits alpha, epsilon and theta) contains the polymerase and the 3'-5' exonuclease proofreading activities. The polymerase is tethered to the template via the dimeric beta sliding clamp processivity factor. The DNA clamp-loading complex assembles the beta sliding clamp onto the primed template and plays a central role in the organization and communication at the replication fork.

It carries out the reaction DNA(n) + a 2'-deoxyribonucleoside 5'-triphosphate = DNA(n+1) + diphosphate. In terms of biological role, part of the beta sliding clamp loading complex, which hydrolyzes ATP to load the beta clamp onto primed DNA to form the DNA replication pre-initiation complex. DNA polymerase III is a complex, multichain enzyme responsible for most of the replicative synthesis in bacteria. This DNA polymerase also exhibits 3'-5' exonuclease activity. The delta subunit is the wrench that will open the beta subunit dimer. The DNA clamp loading complex (tau(3),delta,delta') is thought to load beta dimers onto DNA by binding ATP which alters the complex's conformation so it can bind beta sliding clamp dimers and open them at one interface. Primed DNA is recognized, ATP is hydrolyzed releasing the clamp loading complex and closing the beta sliding clamp ring around the primed DNA. This chain is Probable DNA polymerase III subunit delta, found in Mycoplasma genitalium (strain ATCC 33530 / DSM 19775 / NCTC 10195 / G37) (Mycoplasmoides genitalium).